A 93-amino-acid polypeptide reads, in one-letter code: Parbolysin P4 (93 aa).

Cystine bridges form between Cys16/Cys37, Cys22/Cys33, and Cys47/Cys60.

Belongs to the worm cytolysin family. As to expression, localized within the skin and proboscis and are most readily isolated from body mucus secretions.

Its subcellular location is the secreted. In terms of biological role, cytolysin that shows hemolytic activity (on bovine erythrocytes, HC(50)=5.75 mg/ml). This hemolytic activity is completely inhibited by small unilamelar vesicles composed of PC/PG, PC/PI and PC/PS in 1:1 molar ratios (with at least 100 mg/ml concentration). The chain is Parbolysin P4 from Parborlasia corrugatus (Antarctic nemertean worm).